The chain runs to 342 residues: Foldase protein PrsA (342 aa).

The signal sequence occupies residues 1–20 (MKKKLILAAAGAMAVFSLAA). Residue Cys21 is the site of N-palmitoyl cysteine attachment. The S-diacylglycerol cysteine moiety is linked to residue Cys21. One can recognise a PpiC domain in the interval 142–235 (HPEVEAQIIQ…QTYQTTYYVV (94 aa)). Residues 297–342 (MQTESSSASSEKKESKSSDSKTSDTKTSDSEKATDSSSKTTESSSK) form a disordered region. Over residues 306-330 (SEKKESKSSDSKTSDTKTSDSEKAT) the composition is skewed to basic and acidic residues. Low complexity predominate over residues 331–342 (DSSSKTTESSSK).

The protein belongs to the PrsA family.

The protein localises to the cell membrane. It catalyses the reaction [protein]-peptidylproline (omega=180) = [protein]-peptidylproline (omega=0). Plays a major role in protein secretion by helping the post-translocational extracellular folding of several secreted proteins. The polypeptide is Foldase protein PrsA (Enterococcus faecalis (strain ATCC 700802 / V583)).